We begin with the raw amino-acid sequence, 606 residues long: Melanoma-associated antigen D2 (606 aa).

The segment at 1–204 is disordered; the sequence is MSDTSESGAG…QASGTTGGRR (204 aa). Serine 2 bears the N-acetylserine mark. A Phosphoserine modification is found at serine 5. Positions 24 to 37 are enriched in polar residues; the sequence is SSMMQTLLTVTQNV. Phosphothreonine is present on threonine 72. Residues 81–93 show a composition bias toward polar residues; that stretch reads TQASSTTQLTDTQ. Over residues 122 to 131 the composition is skewed to basic and acidic residues; that stretch reads ETKKVSHVAD. Over residues 142 to 164 the composition is skewed to low complexity; that stretch reads EAAPSQAPADEPEPESAAAQSQE. Serine 157 carries the phosphoserine modification. Residues 171–181 are compositionally biased toward basic residues; that stretch reads KVKAKKARKVK. Residues serine 190, serine 191, serine 194, serine 197, serine 244, and serine 247 each carry the phosphoserine modification. Basic residues predominate over residues 248–260; that stretch reads PKARRGKARRRAA. The interval 248–275 is disordered; sequence PKARRGKARRRAAKLQSSQEPEAPPPRD. 2 positions are modified to phosphoserine: serine 264 and serine 265. Positions 279-478 constitute an MAGE domain; sequence LQGRANDLVK…KEWAAQYREA (200 aa). The tract at residues 534 to 563 is disordered; that stretch reads GAEAKAKAQESGSASTGASTSTNNSASASA.

As to quaternary structure, interacts with GNAS. May interact with DNAJB1. As to expression, widely expressed. In the developing and adult kidney, expressed in the thick ascending limb of the loop of Henle and the distal convoluted tubules outside the loop.

In terms of biological role, regulates the expression, localization to the plasma membrane and function of the sodium chloride cotransporters SLC12A1 and SLC12A3, two key components of salt reabsorption in the distal renal tubule. The polypeptide is Melanoma-associated antigen D2 (MAGED2) (Homo sapiens (Human)).